Here is a 549-residue protein sequence, read N- to C-terminus: Undecaprenyl phosphate-alpha-4-amino-4-deoxy-L-arabinose arabinosyl transferase 2 (549 aa).

Transmembrane regions (helical) follow at residues L9–I29, L80–A102, S112–A132, N133–L153, F176–L196, L204–L224, F259–F279, G290–G310, L312–A332, A342–V362, S377–F397, and C402–P422.

This sequence belongs to the glycosyltransferase 83 family.

It localises to the cell inner membrane. The enzyme catalyses 4-amino-4-deoxy-alpha-L-arabinopyranosyl di-trans,octa-cis-undecaprenyl phosphate + lipid IVA = lipid IIA + di-trans,octa-cis-undecaprenyl phosphate.. It functions in the pathway lipopolysaccharide metabolism; 4-amino-4-deoxy-beta-L-arabinose-lipid A biosynthesis. Its function is as follows. Catalyzes the transfer of the L-Ara4N moiety of the glycolipid undecaprenyl phosphate-alpha-L-Ara4N to lipid A. The modified arabinose is attached to lipid A and is required for resistance to polymyxin and cationic antimicrobial peptides. This Pseudomonas fluorescens (strain Pf0-1) protein is Undecaprenyl phosphate-alpha-4-amino-4-deoxy-L-arabinose arabinosyl transferase 2.